A 406-amino-acid polypeptide reads, in one-letter code: NADH-ubiquinone oxidoreductase 49 kDa subunit (406 aa).

Belongs to the complex I 49 kDa subunit family. In terms of assembly, complex I is composed of 45 different subunits. Component of the iron-sulfur (IP) fragment of the enzyme.

Its subcellular location is the mitochondrion inner membrane. The enzyme catalyses a ubiquinone + NADH + 5 H(+)(in) = a ubiquinol + NAD(+) + 4 H(+)(out). In terms of biological role, core subunit of the mitochondrial membrane respiratory chain NADH dehydrogenase (Complex I) that is believed to belong to the minimal assembly required for catalysis. Complex I functions in the transfer of electrons from NADH to the respiratory chain. The immediate electron acceptor for the enzyme is believed to be ubiquinone. The sequence is that of NADH-ubiquinone oxidoreductase 49 kDa subunit (nad7) from Dictyostelium discoideum (Social amoeba).